Consider the following 454-residue polypeptide: Cerebellar degeneration-related protein 2 (454 aa).

2 coiled-coil regions span residues 44-142 and 192-265; these read ELED…SGQG and EEEN…QSEH. Positions 134–153 are disordered; that stretch reads EELKSSGQGRRSPGKCDQEK. Position 311 is a phosphoserine (S311). Residues 346–380 are a coiled coil; sequence LHEVDTQYSALKVKYEELLKKCQEEQDSLSHKAVQ.

Belongs to the CDR2 family.

This chain is Cerebellar degeneration-related protein 2 (CDR2), found in Homo sapiens (Human).